We begin with the raw amino-acid sequence, 128 residues long: Phosphoribosyl-AMP cyclohydrolase (128 aa).

D77 is a Mg(2+) binding site. C78 contacts Zn(2+). Positions 79 and 81 each coordinate Mg(2+). Zn(2+)-binding residues include C94 and C101.

It belongs to the PRA-CH family. As to quaternary structure, homodimer. It depends on Mg(2+) as a cofactor. The cofactor is Zn(2+).

Its subcellular location is the cytoplasm. It carries out the reaction 1-(5-phospho-beta-D-ribosyl)-5'-AMP + H2O = 1-(5-phospho-beta-D-ribosyl)-5-[(5-phospho-beta-D-ribosylamino)methylideneamino]imidazole-4-carboxamide. It participates in amino-acid biosynthesis; L-histidine biosynthesis; L-histidine from 5-phospho-alpha-D-ribose 1-diphosphate: step 3/9. Catalyzes the hydrolysis of the adenine ring of phosphoribosyl-AMP. This is Phosphoribosyl-AMP cyclohydrolase from Granulibacter bethesdensis (strain ATCC BAA-1260 / CGDNIH1).